Reading from the N-terminus, the 478-residue chain is Aspartate ammonia-lyase (478 aa).

L-aspartate-binding residues include T109, S148, T149, N150, and T195. The tract at residues G326–N335 is SS loop. S327 acts as the Proton acceptor in catalysis. 2 residues coordinate L-aspartate: S328 and K333.

It belongs to the class-II fumarase/aspartase family. Aspartase subfamily. Homotetramer.

It catalyses the reaction L-aspartate = fumarate + NH4(+). In terms of biological role, catalyzes the reversible conversion of L-aspartate to fumarate and ammonia. The polypeptide is Aspartate ammonia-lyase (Pseudomonas fluorescens).